The chain runs to 118 residues: Myotrophin (118 aa).

ANK repeat units lie at residues Met-1–Arg-30, Gly-34–Asp-65, and His-67–Gly-98.

Belongs to the myotrophin family.

It is found in the cytoplasm. The protein localises to the nucleus. It localises to the perinuclear region. Regulates NF-kappa-B transcription factor activity. Promotes growth of cardiomyocytes, but not cardiomyocyte proliferation. Promotes cardiac muscle hypertrophy. Plays a role in the regulation of the growth of actin filaments. Inhibits the activity of the F-actin-capping protein complex. This chain is Myotrophin (mtpn), found in Danio rerio (Zebrafish).